Here is a 295-residue protein sequence, read N- to C-terminus: 4-diphosphocytidyl-2-C-methyl-D-erythritol kinase (295 aa).

The active site involves K22. An ATP-binding site is contributed by 106-116 (PAGGGFGGGSS). D148 is a catalytic residue.

It belongs to the GHMP kinase family. IspE subfamily.

It catalyses the reaction 4-CDP-2-C-methyl-D-erythritol + ATP = 4-CDP-2-C-methyl-D-erythritol 2-phosphate + ADP + H(+). Its pathway is isoprenoid biosynthesis; isopentenyl diphosphate biosynthesis via DXP pathway; isopentenyl diphosphate from 1-deoxy-D-xylulose 5-phosphate: step 3/6. Its function is as follows. Catalyzes the phosphorylation of the position 2 hydroxy group of 4-diphosphocytidyl-2C-methyl-D-erythritol. The chain is 4-diphosphocytidyl-2-C-methyl-D-erythritol kinase from Xanthomonas campestris pv. campestris (strain 8004).